Consider the following 542-residue polypeptide: Chaperonin GroEL (542 aa).

ATP is bound by residues threonine 29–proline 32, aspartate 86–threonine 90, glycine 413, asparagine 476–alanine 478, and aspartate 492.

Belongs to the chaperonin (HSP60) family. Forms a cylinder of 14 subunits composed of two heptameric rings stacked back-to-back. Interacts with the co-chaperonin GroES.

Its subcellular location is the cytoplasm. It carries out the reaction ATP + H2O + a folded polypeptide = ADP + phosphate + an unfolded polypeptide.. Functionally, together with its co-chaperonin GroES, plays an essential role in assisting protein folding. The GroEL-GroES system forms a nano-cage that allows encapsulation of the non-native substrate proteins and provides a physical environment optimized to promote and accelerate protein folding. In Lactococcus lactis subsp. cremoris (strain MG1363), this protein is Chaperonin GroEL.